The primary structure comprises 205 residues: Adenylyl-sulfate kinase (205 aa).

31 to 38 (GLSGSGKS) contacts ATP. Ser-105 functions as the Phosphoserine intermediate in the catalytic mechanism.

It belongs to the APS kinase family.

It catalyses the reaction adenosine 5'-phosphosulfate + ATP = 3'-phosphoadenylyl sulfate + ADP + H(+). The protein operates within sulfur metabolism; hydrogen sulfide biosynthesis; sulfite from sulfate: step 2/3. Its function is as follows. Catalyzes the synthesis of activated sulfate. The sequence is that of Adenylyl-sulfate kinase from Shewanella pealeana (strain ATCC 700345 / ANG-SQ1).